Consider the following 289-residue polypeptide: Protoheme IX farnesyltransferase (289 aa).

The next 9 membrane-spanning stretches (helical) occupy residues 13–33 (LIKP…LYLA), 40–60 (VFLI…SFIF), 85–105 (ISIP…FYML), 111–131 (LLTA…YTIF), 139–159 (NIVI…AAIG), 168–188 (ILFT…AIFL), 212–232 (SIFF…FLEP), 234–254 (MGLL…ILSY), and 269–289 (FLFS…DHMI).

Belongs to the UbiA prenyltransferase family. Protoheme IX farnesyltransferase subfamily.

The protein resides in the cell inner membrane. It carries out the reaction heme b + (2E,6E)-farnesyl diphosphate + H2O = Fe(II)-heme o + diphosphate. The protein operates within porphyrin-containing compound metabolism; heme O biosynthesis; heme O from protoheme: step 1/1. Converts heme B (protoheme IX) to heme O by substitution of the vinyl group on carbon 2 of heme B porphyrin ring with a hydroxyethyl farnesyl side group. The protein is Protoheme IX farnesyltransferase of Leptospira borgpetersenii serovar Hardjo-bovis (strain JB197).